We begin with the raw amino-acid sequence, 152 residues long: Large ribosomal subunit protein uL13 (152 aa).

Residues 133 to 152 (EHPHQAQKPQPLTINTIPGA) form a disordered region. Polar residues predominate over residues 139–152 (QKPQPLTINTIPGA).

This sequence belongs to the universal ribosomal protein uL13 family. As to quaternary structure, part of the 50S ribosomal subunit.

Functionally, this protein is one of the early assembly proteins of the 50S ribosomal subunit, although it is not seen to bind rRNA by itself. It is important during the early stages of 50S assembly. The polypeptide is Large ribosomal subunit protein uL13 (Thermosynechococcus vestitus (strain NIES-2133 / IAM M-273 / BP-1)).